A 285-amino-acid polypeptide reads, in one-letter code: 2-dehydro-3-deoxyphosphooctonate aldolase (285 aa).

This sequence belongs to the KdsA family.

Its subcellular location is the cytoplasm. It carries out the reaction D-arabinose 5-phosphate + phosphoenolpyruvate + H2O = 3-deoxy-alpha-D-manno-2-octulosonate-8-phosphate + phosphate. It participates in carbohydrate biosynthesis; 3-deoxy-D-manno-octulosonate biosynthesis; 3-deoxy-D-manno-octulosonate from D-ribulose 5-phosphate: step 2/3. The protein operates within bacterial outer membrane biogenesis; lipopolysaccharide biosynthesis. In Verminephrobacter eiseniae (strain EF01-2), this protein is 2-dehydro-3-deoxyphosphooctonate aldolase.